The sequence spans 226 residues: Ribonuclease 3 (226 aa).

The region spanning 6-128 (INKLQRKLGY…LIGGVFLDSD (123 aa)) is the RNase III domain. Glu-41 provides a ligand contact to Mg(2+). The active site involves Asp-45. Residues Asp-114 and Glu-117 each coordinate Mg(2+). The active site involves Glu-117. In terms of domain architecture, DRBM spans 155–225 (DPKTRLQEYL…AEQALIKLGL (71 aa)).

It belongs to the ribonuclease III family. As to quaternary structure, homodimer. The cofactor is Mg(2+).

It localises to the cytoplasm. The catalysed reaction is Endonucleolytic cleavage to 5'-phosphomonoester.. Its function is as follows. Digests double-stranded RNA. Involved in the processing of primary rRNA transcript to yield the immediate precursors to the large and small rRNAs (23S and 16S). Processes some mRNAs, and tRNAs when they are encoded in the rRNA operon. Processes pre-crRNA and tracrRNA of type II CRISPR loci if present in the organism. In Pantoea ananatis (strain LMG 20103), this protein is Ribonuclease 3 (rnc).